The sequence spans 780 residues: Aconitate hydratase, mitochondrial (780 aa).

Residues 1-27 (MAPYSLLVSRLQKALGARQYHVASVLC) constitute a mitochondrion transit peptide. Lys-31 carries the N6-succinyllysine modification. Lys-50 bears the N6-acetyllysine; alternate mark. Lys-50 carries the post-translational modification N6-succinyllysine; alternate. Gln-99 provides a ligand contact to substrate. N6-acetyllysine; alternate occurs at positions 138 and 144. N6-succinyllysine; alternate occurs at positions 138 and 144. A substrate-binding site is contributed by 192-194 (DSH). The residue at position 233 (Lys-233) is an N6-acetyllysine; alternate. Lys-233 bears the N6-succinyllysine; alternate mark. Cys-385 provides a ligand contact to [4Fe-4S] cluster. At Lys-411 the chain carries N6-succinyllysine. Residues Cys-448 and Cys-451 each coordinate [4Fe-4S] cluster. Residues Arg-474 and Arg-479 each contribute to the substrate site. Lys-517 and Lys-523 each carry N6-acetyllysine; alternate. 2 positions are modified to N6-succinyllysine; alternate: Lys-517 and Lys-523. A compositionally biased stretch (basic and acidic residues) spans 524–537 (LEAPDADELPRAEF). The segment at 524–560 (LEAPDADELPRAEFDPGQDTYQHPPKDSSGQQVDVSP) is disordered. At Lys-549 the chain carries N6-succinyllysine. Residues 551–560 (SSGQQVDVSP) are compositionally biased toward polar residues. At Ser-559 the chain carries Phosphoserine. Lys-573 carries the post-translational modification N6-acetyllysine; alternate. N6-succinyllysine; alternate is present on Lys-573. N6-succinyllysine is present on Lys-591. The residue at position 605 (Lys-605) is an N6-acetyllysine; alternate. At Lys-605 the chain carries N6-succinyllysine; alternate. Residue Arg-607 participates in substrate binding. An N6-succinyllysine modification is found at Lys-628. Residue Ser-670 is modified to Phosphoserine. 670-671 (SR) serves as a coordination point for substrate. At Lys-689 the chain carries N6-succinyllysine. Lys-723 and Lys-730 each carry N6-acetyllysine; alternate. 2 positions are modified to N6-succinyllysine; alternate: Lys-723 and Lys-730. Residues Lys-736 and Lys-743 each carry the N6-acetyllysine modification.

It belongs to the aconitase/IPM isomerase family. As to quaternary structure, monomer. The cofactor is [4Fe-4S] cluster. In terms of processing, forms covalent cross-links mediated by transglutaminase TGM2, between a glutamine and the epsilon-amino group of a lysine residue, forming homopolymers and heteropolymers.

It localises to the mitochondrion. It carries out the reaction citrate = D-threo-isocitrate. The protein operates within carbohydrate metabolism; tricarboxylic acid cycle; isocitrate from oxaloacetate: step 2/2. Its function is as follows. Catalyzes the isomerization of citrate to isocitrate via cis-aconitate. The sequence is that of Aconitate hydratase, mitochondrial (ACO2) from Bos taurus (Bovine).